The following is a 273-amino-acid chain: Transposable element Tcb2 transposase (273 aa).

This sequence belongs to the transposase 5 family.

The protein resides in the nucleus. In terms of biological role, probably essential for transposable element Tcb2 transposition. This is Transposable element Tcb2 transposase from Caenorhabditis briggsae.